The primary structure comprises 119 residues: Protein Wnt-4 (119 aa).

S1 carries the O-palmitoleoyl serine; by PORCN lipid modification. Cystine bridges form between C69/C100 and C85/C95. N86 is a glycosylation site (N-linked (GlcNAc...) asparagine).

This sequence belongs to the Wnt family. Post-translationally, palmitoleoylation is required for efficient binding to frizzled receptors. Depalmitoleoylation leads to Wnt signaling pathway inhibition.

The protein resides in the secreted. The protein localises to the extracellular space. It is found in the extracellular matrix. Ligand for members of the frizzled family of seven transmembrane receptors. Plays an important role in embryonic development. The protein is Protein Wnt-4 (WNT4) of Meleagris gallopavo (Wild turkey).